The chain runs to 199 residues: MTVPLILASGSAIRAQLLENAAVPFTKDVPRVDEESVKAALLAESAPPRDIADALAEMKARKISDKHPGAMVLGCDQVLDFQGRLLSKPDSPETALAELKQMSGQRHMLLSAAVIYENGQPVWRHVGQVRLRMRALSDSYLSGYVARNWDSIRHAVGGYKLEEEGVRLFSTIDGDHFNVLGMPLLELLNFLALRGVIDT.

Residue D76 is the Proton acceptor of the active site.

The protein belongs to the Maf family. Requires a divalent metal cation as cofactor.

It localises to the cytoplasm. It catalyses the reaction a ribonucleoside 5'-triphosphate + H2O = a ribonucleoside 5'-phosphate + diphosphate + H(+). The catalysed reaction is a 2'-deoxyribonucleoside 5'-triphosphate + H2O = a 2'-deoxyribonucleoside 5'-phosphate + diphosphate + H(+). Nucleoside triphosphate pyrophosphatase. May have a dual role in cell division arrest and in preventing the incorporation of modified nucleotides into cellular nucleic acids. This Ruegeria pomeroyi (strain ATCC 700808 / DSM 15171 / DSS-3) (Silicibacter pomeroyi) protein is Nucleoside triphosphate pyrophosphatase.